A 461-amino-acid polypeptide reads, in one-letter code: Steroidogenic factor 1 (461 aa).

Positions 10-85 form a DNA-binding region, nuclear receptor; the sequence is DELCPVCGDK…VGMRLEAVRA (76 aa). Residues 13-33 form an NR C4-type zinc finger; the sequence is CPVCGDKVSGYHYGLLTCESC. N6-acetyllysine occurs at positions 34, 38, and 72. The NR C4-type zinc-finger motif lies at 49-73; it reads CTESQSCKIDKTQRKRCPFCRFQKC. Lys119 participates in a covalent cross-link: Glycyl lysine isopeptide (Lys-Gly) (interchain with G-Cter in SUMO). The disordered stretch occupies residues 119–157; that stretch reads KLETGPPMGVPPPPPPAPDYVLPPSLHGPEPKGLAAGPP. Positions 126-136 are enriched in pro residues; sequence MGVPPPPPPAP. A Glycyl lysine isopeptide (Lys-Gly) (interchain with G-Cter in SUMO) cross-link involves residue Lys194. At Ser203 the chain carries Phosphoserine; by CDK7. An NR LBD domain is found at 222 to 459; the sequence is NVPELILQLL…NLLIEMLQAK (238 aa). Residues 230–461 are important for dimerization; that stretch reads LLQLEPDEDQ…LIEMLQAKQT (232 aa). A 1,2-diacyl-sn-glycero-3-phosphocholine is bound by residues Gly341, Tyr436, and Lys440. Positions 341, 436, and 440 each coordinate a 1,2-diacylglycero-3-phosphoethanolamine.

It belongs to the nuclear hormone receptor family. NR5 subfamily. As to quaternary structure, binds DNA as a monomer. Interacts with NR0B2 and PPARGC1A. Part of a complex consisting of SFPQ, NONO and NR5A1. Interacts with NCOA2. Interacts with DGKQ and CDK7. Binds to and activated by HIPK3. In terms of processing, acetylation stimulates the transcriptional activity. Sumoylation reduces CDK7-mediated phosphorylation on Ser-203. Post-translationally, phosphorylated on Ser-203 by CDK7. This phosphorylation promotes transcriptional activity. As to expression, high expressed in the adrenal cortex, the ovary, the testis, and the spleen.

The protein resides in the nucleus. Transcriptional activator. Essential for sexual differentiation and formation of the primary steroidogenic tissues. Binds to the Ad4 site found in the promoter region of steroidogenic P450 genes such as CYP11A, CYP11B and CYP21B. Also regulates the AMH/Muellerian inhibiting substance gene as well as the AHCH and STAR genes. 5'-YCAAGGYC-3' and 5'-RRAGGTCA-3' are the consensus sequences for the recognition by NR5A1. The SFPQ-NONO-NR5A1 complex binds to the CYP17 promoter and regulates basal and cAMP-dependent transcriptional activity. Binds phosphatidylcholine. Binds phospholipids with a phosphatidylinositol (PI) headgroup, in particular PI(3,4)P2 and PI(3,4,5)P3. Activated by the phosphorylation of NR5A1 by HIPK3 leading to increased steroidogenic gene expression upon cAMP signaling pathway stimulation. The protein is Steroidogenic factor 1 (NR5A1) of Homo sapiens (Human).